We begin with the raw amino-acid sequence, 375 residues long: Acetylornithine aminotransferase (375 aa).

Pyridoxal 5'-phosphate contacts are provided by residues 93–94 (GT) and phenylalanine 120. Position 123 (arginine 123) interacts with N(2)-acetyl-L-ornithine. 205-208 (DEVQ) is a binding site for pyridoxal 5'-phosphate. N6-(pyridoxal phosphate)lysine is present on lysine 234. Position 262 (threonine 262) interacts with N(2)-acetyl-L-ornithine. Threonine 263 contributes to the pyridoxal 5'-phosphate binding site.

It belongs to the class-III pyridoxal-phosphate-dependent aminotransferase family. ArgD subfamily. Homodimer. It depends on pyridoxal 5'-phosphate as a cofactor.

Its subcellular location is the cytoplasm. It carries out the reaction N(2)-acetyl-L-ornithine + 2-oxoglutarate = N-acetyl-L-glutamate 5-semialdehyde + L-glutamate. It participates in amino-acid biosynthesis; L-arginine biosynthesis; N(2)-acetyl-L-ornithine from L-glutamate: step 4/4. The polypeptide is Acetylornithine aminotransferase (Staphylococcus epidermidis (strain ATCC 35984 / DSM 28319 / BCRC 17069 / CCUG 31568 / BM 3577 / RP62A)).